Consider the following 305-residue polypeptide: Probable L-ribulose-5-phosphate 3-epimerase UlaE (305 aa).

Belongs to the L-ribulose-5-phosphate 3-epimerase family.

The catalysed reaction is L-ribulose 5-phosphate = L-xylulose 5-phosphate. It functions in the pathway cofactor degradation; L-ascorbate degradation; D-xylulose 5-phosphate from L-ascorbate: step 3/4. Its function is as follows. Catalyzes the isomerization of L-xylulose-5-phosphate to L-ribulose-5-phosphate. Is involved in the anaerobic L-ascorbate utilization. The sequence is that of Probable L-ribulose-5-phosphate 3-epimerase UlaE (ulaE) from Mycoplasma pneumoniae (strain ATCC 29342 / M129 / Subtype 1) (Mycoplasmoides pneumoniae).